The primary structure comprises 337 residues: DNA-directed RNA polymerase subunit alpha (337 aa).

An alpha N-terminal domain (alpha-NTD) region spans residues 1-233; sequence MIQKNWQELI…DQLSLFVNFE (233 aa). An alpha C-terminal domain (alpha-CTD) region spans residues 249 to 337; the sequence is FNPALLKKVD…DLAKRYEDQY (89 aa).

The protein belongs to the RNA polymerase alpha chain family. In terms of assembly, homodimer. The RNAP catalytic core consists of 2 alpha, 1 beta, 1 beta' and 1 omega subunit. When a sigma factor is associated with the core the holoenzyme is formed, which can initiate transcription.

It carries out the reaction RNA(n) + a ribonucleoside 5'-triphosphate = RNA(n+1) + diphosphate. Functionally, DNA-dependent RNA polymerase catalyzes the transcription of DNA into RNA using the four ribonucleoside triphosphates as substrates. This is DNA-directed RNA polymerase subunit alpha from Bartonella quintana (strain Toulouse) (Rochalimaea quintana).